A 230-amino-acid polypeptide reads, in one-letter code: Cytochrome c oxidase subunit 2 (230 aa).

At 1-29 (NNFFQGYNLLFQHSLFASYMDWFHAFNCS) the chain is on the mitochondrial intermembrane side. A helical transmembrane segment spans residues 30-50 (LLLGVLVFVTLLFGYLIFSTF). Over 51–63 (YFKSKKIEYQFGE) the chain is Mitochondrial matrix. Residues 64-84 (LLCSIFPTIILLMQMVPSLSL) form a helical membrane-spanning segment. Residues 85-230 (LYYYGLMNLD…FKSWCFGTME (146 aa)) are Mitochondrial intermembrane-facing. Residues H163, C198, E200, C202, H206, and M209 each contribute to the Cu cation site. E200 contacts Mg(2+).

It belongs to the cytochrome c oxidase subunit 2 family. Component of the cytochrome c oxidase (complex IV, CIV), a multisubunit enzyme composed of a catalytic core of 3 subunits and several supernumerary subunits. The complex exists as a monomer or a dimer and forms supercomplexes (SCs) in the inner mitochondrial membrane with ubiquinol-cytochrome c oxidoreductase (cytochrome b-c1 complex, complex III, CIII). It depends on Cu cation as a cofactor.

It localises to the mitochondrion inner membrane. The catalysed reaction is 4 Fe(II)-[cytochrome c] + O2 + 8 H(+)(in) = 4 Fe(III)-[cytochrome c] + 2 H2O + 4 H(+)(out). In terms of biological role, component of the cytochrome c oxidase, the last enzyme in the mitochondrial electron transport chain which drives oxidative phosphorylation. The respiratory chain contains 3 multisubunit complexes succinate dehydrogenase (complex II, CII), ubiquinol-cytochrome c oxidoreductase (cytochrome b-c1 complex, complex III, CIII) and cytochrome c oxidase (complex IV, CIV), that cooperate to transfer electrons derived from NADH and succinate to molecular oxygen, creating an electrochemical gradient over the inner membrane that drives transmembrane transport and the ATP synthase. Cytochrome c oxidase is the component of the respiratory chain that catalyzes the reduction of oxygen to water. Electrons originating from reduced cytochrome c in the intermembrane space (IMS) are transferred via the dinuclear copper A center (CU(A)) of subunit 2 and heme A of subunit 1 to the active site in subunit 1, a binuclear center (BNC) formed by heme A3 and copper B (CU(B)). The BNC reduces molecular oxygen to 2 water molecules using 4 electrons from cytochrome c in the IMS and 4 protons from the mitochondrial matrix. This is Cytochrome c oxidase subunit 2 (cox-2) from Caenorhabditis remanei (Caenorhabditis vulgaris).